The primary structure comprises 1517 residues: DNA-directed RNA polymerase subunit beta' (1517 aa).

Zn(2+) is bound by residues Cys71, Cys73, Cys86, and Cys89. Asp482, Asp484, and Asp486 together coordinate Mg(2+). Zn(2+)-binding residues include Cys812, Cys886, Cys893, and Cys896.

Belongs to the RNA polymerase beta' chain family. In terms of assembly, the RNAP catalytic core consists of 2 alpha, 1 beta, 1 beta' and 1 omega subunit. When a sigma factor is associated with the core the holoenzyme is formed, which can initiate transcription. Mg(2+) serves as cofactor. It depends on Zn(2+) as a cofactor.

It carries out the reaction RNA(n) + a ribonucleoside 5'-triphosphate = RNA(n+1) + diphosphate. DNA-dependent RNA polymerase catalyzes the transcription of DNA into RNA using the four ribonucleoside triphosphates as substrates. This Campylobacter jejuni (strain RM1221) protein is DNA-directed RNA polymerase subunit beta'.